The sequence spans 100 residues: NAD(P)H-quinone oxidoreductase subunit 4L, chloroplastic (100 aa).

The next 3 helical transmembrane spans lie at 1-21, 29-49, and 63-83; these read MLEH…YGLI, ALMC…TFSN, and IFVT…ALAI.

The protein belongs to the complex I subunit 4L family. As to quaternary structure, NDH is composed of at least 16 different subunits, 5 of which are encoded in the nucleus.

It is found in the plastid. The protein localises to the chloroplast thylakoid membrane. The enzyme catalyses a plastoquinone + NADH + (n+1) H(+)(in) = a plastoquinol + NAD(+) + n H(+)(out). It catalyses the reaction a plastoquinone + NADPH + (n+1) H(+)(in) = a plastoquinol + NADP(+) + n H(+)(out). In terms of biological role, NDH shuttles electrons from NAD(P)H:plastoquinone, via FMN and iron-sulfur (Fe-S) centers, to quinones in the photosynthetic chain and possibly in a chloroplast respiratory chain. The immediate electron acceptor for the enzyme in this species is believed to be plastoquinone. Couples the redox reaction to proton translocation, and thus conserves the redox energy in a proton gradient. This Cycas taitungensis (Prince sago) protein is NAD(P)H-quinone oxidoreductase subunit 4L, chloroplastic.